Reading from the N-terminus, the 86-residue chain is Exodeoxyribonuclease 7 small subunit (86 aa).

Positions 1–26 (MQDELFETEKAPQKNAKNAKNAPKKS) are disordered.

Belongs to the XseB family. In terms of assembly, heterooligomer composed of large and small subunits.

It is found in the cytoplasm. The enzyme catalyses Exonucleolytic cleavage in either 5'- to 3'- or 3'- to 5'-direction to yield nucleoside 5'-phosphates.. In terms of biological role, bidirectionally degrades single-stranded DNA into large acid-insoluble oligonucleotides, which are then degraded further into small acid-soluble oligonucleotides. This chain is Exodeoxyribonuclease 7 small subunit, found in Helicobacter pylori (strain J99 / ATCC 700824) (Campylobacter pylori J99).